A 179-amino-acid chain; its full sequence is Dynein light chain Tctex-type 5 (179 aa).

It belongs to the dynein light chain Tctex-type family. Interacts with ZMYND10.

The sequence is that of Dynein light chain Tctex-type 5 (DYNLT5) from Homo sapiens (Human).